The primary structure comprises 553 residues: 5'-nucleotidase (553 aa).

The signal sequence occupies residues 1-21; that stretch reads MKQRLIVKTALSAAILATLAG. A lipid anchor (N-palmitoyl cysteine) is attached at Cys22. The S-diacylglycerol cysteine moiety is linked to residue Cys22. Residues Asp45, His47, Asp88, Asn120, His221, His256, and Gln258 each contribute to the a divalent metal cation site. Substrate-binding positions include Phe432 and 501–507; that span reads YNAAGGD.

The protein belongs to the 5'-nucleotidase family. Chloride serves as cofactor. Requires Mg(2+) as cofactor.

Its subcellular location is the cell outer membrane. The enzyme catalyses a ribonucleoside 5'-phosphate + H2O = a ribonucleoside + phosphate. In terms of biological role, degradation of extracellular 5'-nucleotides for nutritional needs. The protein is 5'-nucleotidase (nutA) of Vibrio vulnificus (strain CMCP6).